Consider the following 600-residue polypeptide: FERM domain-containing protein 3 (600 aa).

Residues 31 to 311 form the FERM domain; the sequence is MRCTIRLLDD…ENQAFYKYAK (281 aa). The segment at 413 to 440 is disordered; the sequence is SAPVLGNSPARGLETTADVTHDEEESIR. Residues 534–554 traverse the membrane as a helical segment; sequence LLLAAIGLLMVVLPLLLILLE.

The protein resides in the membrane. The protein is FERM domain-containing protein 3 (frmd3) of Xenopus tropicalis (Western clawed frog).